Consider the following 415-residue polypeptide: Dynein assembly factor with WD repeat domains 1 (415 aa).

WD repeat units lie at residues 90 to 129 (AHIL…ELHT), 132 to 172 (GHRN…CFYT), 175 to 214 (GHTA…EVST), 217 to 256 (GHFA…KVHV), 259 to 298 (GHRG…CLAT), 301 to 340 (GHND…CLCQ), 343 to 384 (GHKG…QVLE), and 385 to 415 (GHSD…RIWH).

It belongs to the WD repeat WDR69 family. As to expression, expressed in organs bearing motile cilia, including the pronephros, otic vesicles and Kupffer's vesicle.

Its subcellular location is the cytoplasm. The protein localises to the cytoskeleton. It is found in the flagellum basal body. The protein resides in the flagellum axoneme. Required for axonemal dynein assembly and ciliary motility in ciliated organs, including Kupffer's vesicle, during embryogenesis. Facilitates the onset of robust cilia motility during development. This chain is Dynein assembly factor with WD repeat domains 1 (daw1), found in Danio rerio (Zebrafish).